Reading from the N-terminus, the 217-residue chain is 3,4-dihydroxy-2-butanone 4-phosphate synthase (217 aa).

Residues 37 to 38 (RE), D42, 150 to 154 (RGGHT), and E174 contribute to the D-ribulose 5-phosphate site. Residue E38 coordinates Mg(2+). H153 contributes to the Mg(2+) binding site.

The protein belongs to the DHBP synthase family. In terms of assembly, homodimer. Requires Mg(2+) as cofactor. It depends on Mn(2+) as a cofactor.

The enzyme catalyses D-ribulose 5-phosphate = (2S)-2-hydroxy-3-oxobutyl phosphate + formate + H(+). It functions in the pathway cofactor biosynthesis; riboflavin biosynthesis; 2-hydroxy-3-oxobutyl phosphate from D-ribulose 5-phosphate: step 1/1. In terms of biological role, catalyzes the conversion of D-ribulose 5-phosphate to formate and 3,4-dihydroxy-2-butanone 4-phosphate. The protein is 3,4-dihydroxy-2-butanone 4-phosphate synthase of Salmonella heidelberg (strain SL476).